The following is a 348-amino-acid chain: Phosphate acyltransferase (348 aa).

Belongs to the PlsX family. As to quaternary structure, homodimer. Probably interacts with PlsY.

The protein resides in the cytoplasm. It carries out the reaction a fatty acyl-[ACP] + phosphate = an acyl phosphate + holo-[ACP]. The protein operates within lipid metabolism; phospholipid metabolism. In terms of biological role, catalyzes the reversible formation of acyl-phosphate (acyl-PO(4)) from acyl-[acyl-carrier-protein] (acyl-ACP). This enzyme utilizes acyl-ACP as fatty acyl donor, but not acyl-CoA. In Francisella philomiragia subsp. philomiragia (strain ATCC 25017 / CCUG 19701 / FSC 153 / O#319-036), this protein is Phosphate acyltransferase.